Reading from the N-terminus, the 120-residue chain is Large ribosomal subunit protein uL22 (120 aa).

It belongs to the universal ribosomal protein uL22 family. As to quaternary structure, part of the 50S ribosomal subunit.

Its function is as follows. This protein binds specifically to 23S rRNA; its binding is stimulated by other ribosomal proteins, e.g. L4, L17, and L20. It is important during the early stages of 50S assembly. It makes multiple contacts with different domains of the 23S rRNA in the assembled 50S subunit and ribosome. Functionally, the globular domain of the protein is located near the polypeptide exit tunnel on the outside of the subunit, while an extended beta-hairpin is found that lines the wall of the exit tunnel in the center of the 70S ribosome. In Corynebacterium glutamicum (strain R), this protein is Large ribosomal subunit protein uL22.